Consider the following 218-residue polypeptide: MGQKVNPIGLRIGIIRDWESRWYAEKDYADLLHEDLKIREYLTKRLSDAAVSRIEIERAANRVNITIHTAKPGMVIGKGGSEVEALRKALNELTGKRVHINIVEIKKPDLEAKLVAENIARQIENRVSFRRAQKQAIQRTMRAGAKGIKTMVSGRLGGADIARSEHYSEGTVPLHTLRADIDYATAEADTTYGKIGVKVWIYRGEVLPTKKKTEEGGN.

The region spanning 38-106 is the KH type-2 domain; the sequence is IREYLTKRLS…RVHINIVEIK (69 aa).

This sequence belongs to the universal ribosomal protein uS3 family. Part of the 30S ribosomal subunit. Forms a tight complex with proteins S10 and S14.

Its function is as follows. Binds the lower part of the 30S subunit head. Binds mRNA in the 70S ribosome, positioning it for translation. This is Small ribosomal subunit protein uS3 from Anoxybacillus flavithermus (strain DSM 21510 / WK1).